A 711-amino-acid chain; its full sequence is MKSLILAEKPSVGRDIANALNLQQKSNGYIEGKQYIVTWALGHLVTNATPEQYNPSYKEWNLEDLPIIPKKMKTVVISKTNRQFKIVKSLILDKNVKEIIIATDAGREGELVARLILDKVGNKKPIKRLWISSVTKKAIQEGFKQLKNGNAYQNLYEAALARSEADWIVGINATRALTTKYDAQLSLGRVQTPTIQIVKSRQDEINYFKPEKYYTLSINVDGYDLNLKQQKRYKDKKELELIEHKIKHQEGKILEVKGKNKKSYAQPLFNLTDLQQEAYKRYKMGPKETLNTLQHLYERHKLVTYPRTDSNYLTDDMVDTIQERLRAILATDYKSHVRDLISESFSSKMHIFNNQKVSDHHAIIPTEVRPSIEQLSQREFKIYMLIAERFLENLMNPYLYEVLTIHAQLKDYNFVLKEIIPKQLGYKALKDQTSSHTLTHSFKEGQLFKVHRIEIHEHETKAPEYFNEGSLLKAMENPQNHIDLNDKKYAKTLKHSGGIGTVATRADIIEKLFNMNALESRDGKIKVTSKGKQILELSPSELTSPILTAQWEEKLMLIEKGKYNSQKFIQEMKNFTFKVVNKIKSSEQKYKHDNLTTTECPTCGKFMIKVKTKNGQMLVCQDPKCKTKKNIQRKTNARCPNCKKKMTLFGKGKEAVYRCVCGHTETQSQMDKRMRDKTNGKVSRKEMKKYINKKEEIDNNPFKDALKNLKL.

In terms of domain architecture, Toprim spans 2–135; the sequence is KSLILAEKPS…IKRLWISSVT (134 aa). 2 residues coordinate Mg(2+): glutamate 8 and aspartate 104. One can recognise a Topo IA-type catalytic domain in the interval 152 to 580; that stretch reads YQNLYEAALA…EMKNFTFKVV (429 aa). Positions 186–191 are interaction with DNA; the sequence is SLGRVQ. The active-site O-(5'-phospho-DNA)-tyrosine intermediate is the tyrosine 305.

This sequence belongs to the type IA topoisomerase family. Mg(2+) is required as a cofactor.

The catalysed reaction is ATP-independent breakage of single-stranded DNA, followed by passage and rejoining.. In terms of biological role, releases the supercoiling and torsional tension of DNA, which is introduced during the DNA replication and transcription, by transiently cleaving and rejoining one strand of the DNA duplex. Introduces a single-strand break via transesterification at a target site in duplex DNA. The scissile phosphodiester is attacked by the catalytic tyrosine of the enzyme, resulting in the formation of a DNA-(5'-phosphotyrosyl)-enzyme intermediate and the expulsion of a 3'-OH DNA strand. The free DNA strand then undergoes passage around the unbroken strand, thus removing DNA supercoils. Finally, in the religation step, the DNA 3'-OH attacks the covalent intermediate to expel the active-site tyrosine and restore the DNA phosphodiester backbone. This is DNA topoisomerase 3 from Staphylococcus epidermidis (strain ATCC 12228 / FDA PCI 1200).